A 257-amino-acid chain; its full sequence is Zinc transporter ZupT (257 aa).

3 consecutive transmembrane segments (helical) span residues 5-25 (LILTLLAGAATFIGAFLGVLG), 32-52 (VLAFSLGFAAGIMLLISLMEM), and 61-81 (GMSPVLGYGMFIIGLLGYFGL). 2 residues coordinate Fe(2+): asparagine 120 and glutamate 123. Residues glutamate 123 and histidine 148 each coordinate Zn(2+). The Fe(2+) site is built by asparagine 149, glutamate 152, and glutamate 181. Position 152 (glutamate 152) interacts with Zn(2+). The next 3 helical transmembrane spans lie at 182–202 (IFGGVLAWLILGSLVSPIVMA), 203–223 (AIMAAVAGIMVALSVDELMPL), and 236–256 (GVLCGMSVMGLSLVILQTIGI).

The protein belongs to the ZIP transporter (TC 2.A.5) family. ZupT subfamily.

The protein localises to the cell inner membrane. It catalyses the reaction Zn(2+)(in) = Zn(2+)(out). Mediates zinc uptake. May also transport other divalent cations. In Salmonella arizonae (strain ATCC BAA-731 / CDC346-86 / RSK2980), this protein is Zinc transporter ZupT.